Reading from the N-terminus, the 607-residue chain is MSSCINPSTLATSVNGFKCLPLATNRAAIRIMAKNKPVQCLVSTKYDNLTVDRRSANYQPSIWDHDFLQSLNSNYTDETYKRRAEELKGKVKTAIKDVTEPLDQLELIDNLQRLGLAYHFEPEIRNILRNIHNHNKDYNWRKENLYATSLEFRLLRQHGYPVSQEVFSGFKDDKVGFICDDFKGILSLHEASYYSLEGESIMEEAWQFTSKHLKEMMITSNSKEEDVFVAEQAKRALELPLHWKAPMLEARWFIHVYEKREDKNHLLLELAKLEFNTLQAIYQEELKDISGWWKDTGLGEKLSFARNRLVASFLWSMGIAFEPQFAYCRRVLTISIALITVIDDIYDVYGTLDELEIFTDAVARWDINYALKHLPGYMKMCFLALYNFVNEFAYYVLKQQDFDMLLSIKHAWLGLIQAYLVEAKWYHSKYTPKLEEYLENGLVSITGPLIITISYLSGTNPIIKKELEFLESNPDIVHWSSKIFRLQDDLGTSSDEIQRGDVPKSIQCYMHETGASEEVAREHIKDMMRQMWKKVNAYTADKDSPLTRTTAEFLLNLVRMSHFMYLHGDGHGVQNQETIDVGFTLLFQPIPLEDKDMAFTASPGTKG.

A chloroplast-targeting transit peptide spans 1-52 (MSSCINPSTLATSVNGFKCLPLATNRAAIRIMAKNKPVQCLVSTKYDNLTVD). Mn(2+) contacts are provided by Asp-343 and Asp-347. Substrate is bound by residues Asp-343, Asp-347, Arg-485, Asp-488, and Lys-504. Residues 343 to 347 (DDIYD) carry the DDXXD motif motif. A Mn(2+)-binding site is contributed by Asp-488.

This sequence belongs to the terpene synthase family. The cofactor is Mg(2+). Mn(2+) is required as a cofactor.

The protein resides in the plastid. It is found in the chloroplast. The enzyme catalyses (2E)-geranyl diphosphate = (4R)-limonene + diphosphate. Its activity is regulated as follows. Inhibited by 2-fluorogeranyl diphosphate (FGPP) and 2-fluoroneryl diphosphate (FNPP). Its function is as follows. Catalyzes the conversion of geranyl diphosphate to (+)-(4R)-limonene. Produces exclusively the (+)-enantiomer. Can use neryl diphosphate as substrate. Has no activity with farnesyl diphosphate. The protein is (R)-limonene synthase 1, chloroplastic of Citrus sinensis (Sweet orange).